The following is a 253-amino-acid chain: 5'/3'-nucleotidase SurE (253 aa).

A divalent metal cation contacts are provided by D8, D9, S39, and N92.

Belongs to the SurE nucleotidase family. The cofactor is a divalent metal cation.

The protein resides in the cytoplasm. It carries out the reaction a ribonucleoside 5'-phosphate + H2O = a ribonucleoside + phosphate. It catalyses the reaction a ribonucleoside 3'-phosphate + H2O = a ribonucleoside + phosphate. The enzyme catalyses [phosphate](n) + H2O = [phosphate](n-1) + phosphate + H(+). In terms of biological role, nucleotidase with a broad substrate specificity as it can dephosphorylate various ribo- and deoxyribonucleoside 5'-monophosphates and ribonucleoside 3'-monophosphates with highest affinity to 3'-AMP. Also hydrolyzes polyphosphate (exopolyphosphatase activity) with the preference for short-chain-length substrates (P20-25). Might be involved in the regulation of dNTP and NTP pools, and in the turnover of 3'-mononucleotides produced by numerous intracellular RNases (T1, T2, and F) during the degradation of various RNAs. This chain is 5'/3'-nucleotidase SurE, found in Salmonella arizonae (strain ATCC BAA-731 / CDC346-86 / RSK2980).